The primary structure comprises 304 residues: UDP-3-O-acyl-N-acetylglucosamine deacetylase (304 aa).

Zn(2+) is bound by residues H78, H235, and D239. H262 (proton donor) is an active-site residue.

Belongs to the LpxC family. It depends on Zn(2+) as a cofactor.

It carries out the reaction a UDP-3-O-[(3R)-3-hydroxyacyl]-N-acetyl-alpha-D-glucosamine + H2O = a UDP-3-O-[(3R)-3-hydroxyacyl]-alpha-D-glucosamine + acetate. The protein operates within glycolipid biosynthesis; lipid IV(A) biosynthesis; lipid IV(A) from (3R)-3-hydroxytetradecanoyl-[acyl-carrier-protein] and UDP-N-acetyl-alpha-D-glucosamine: step 2/6. Its function is as follows. Catalyzes the hydrolysis of UDP-3-O-myristoyl-N-acetylglucosamine to form UDP-3-O-myristoylglucosamine and acetate, the committed step in lipid A biosynthesis. This chain is UDP-3-O-acyl-N-acetylglucosamine deacetylase, found in Anaeromyxobacter sp. (strain Fw109-5).